A 245-amino-acid chain; its full sequence is 1-(5-phosphoribosyl)-5-[(5-phosphoribosylamino)methylideneamino] imidazole-4-carboxamide isomerase (245 aa).

Residue aspartate 7 is the Proton acceptor of the active site. Aspartate 129 acts as the Proton donor in catalysis.

This sequence belongs to the HisA/HisF family.

The protein localises to the cytoplasm. It carries out the reaction 1-(5-phospho-beta-D-ribosyl)-5-[(5-phospho-beta-D-ribosylamino)methylideneamino]imidazole-4-carboxamide = 5-[(5-phospho-1-deoxy-D-ribulos-1-ylimino)methylamino]-1-(5-phospho-beta-D-ribosyl)imidazole-4-carboxamide. It functions in the pathway amino-acid biosynthesis; L-histidine biosynthesis; L-histidine from 5-phospho-alpha-D-ribose 1-diphosphate: step 4/9. This Tolumonas auensis (strain DSM 9187 / NBRC 110442 / TA 4) protein is 1-(5-phosphoribosyl)-5-[(5-phosphoribosylamino)methylideneamino] imidazole-4-carboxamide isomerase.